The primary structure comprises 47 residues: Bifunctional chitinase/lysozyme (47 aa).

One can recognise a GH18 domain in the interval G1–A47.

It belongs to the glycosyl hydrolase 18 family. Chitinase class II subfamily.

It localises to the secreted. Its subcellular location is the extracellular space. The enzyme catalyses Random endo-hydrolysis of N-acetyl-beta-D-glucosaminide (1-&gt;4)-beta-linkages in chitin and chitodextrins.. The catalysed reaction is Hydrolysis of (1-&gt;4)-beta-linkages between N-acetylmuramic acid and N-acetyl-D-glucosamine residues in a peptidoglycan and between N-acetyl-D-glucosamine residues in chitodextrins.. Its function is as follows. Bifunctional enzyme with lysozyme/chitinase activity. The polypeptide is Bifunctional chitinase/lysozyme (Parthenocissus quinquefolia (Virginia creeper)).